A 545-amino-acid chain; its full sequence is Capsular polysaccharide phosphotransferase SacB (545 aa).

The protein belongs to the stealth family.

Its function is as follows. May be the polymerase that links individual UDP-N-acetyl-D-mannosamine monomers. In serotype A the capsule is composed of repeated units of (alpha 1-6)-linked N-acetyl-D-mannosamine-1-phosphate. This Neisseria meningitidis serogroup A protein is Capsular polysaccharide phosphotransferase SacB (sacB).